The following is a 100-amino-acid chain: MFAIIQTGGKQYRVSEGDVIRVESLQGEAGDKVELKALFVGGEQTVFGEDAGKYTVQAEVVEHGRGKKIYIRKYKSGVQYRRRTGHRQNFTAIKILGIQG.

It belongs to the bacterial ribosomal protein bL21 family. Part of the 50S ribosomal subunit. Contacts proteins L15 and L20.

Its function is as follows. Binds directly to 23S rRNA, probably serving to organize its structure. The chain is Large ribosomal subunit protein bL21 from Deinococcus radiodurans (strain ATCC 13939 / DSM 20539 / JCM 16871 / CCUG 27074 / LMG 4051 / NBRC 15346 / NCIMB 9279 / VKM B-1422 / R1).